The primary structure comprises 289 residues: Energy-coupling factor transporter ATP-binding protein EcfA2 (289 aa).

In terms of domain architecture, ABC transporter spans I3–D246. G40 to S47 provides a ligand contact to ATP.

It belongs to the ABC transporter superfamily. Energy-coupling factor EcfA family. Forms a stable energy-coupling factor (ECF) transporter complex composed of 2 membrane-embedded substrate-binding proteins (S component), 2 ATP-binding proteins (A component) and 2 transmembrane proteins (T component).

The protein resides in the cell membrane. Functionally, ATP-binding (A) component of a common energy-coupling factor (ECF) ABC-transporter complex. Unlike classic ABC transporters this ECF transporter provides the energy necessary to transport a number of different substrates. In Bacillus licheniformis (strain ATCC 14580 / DSM 13 / JCM 2505 / CCUG 7422 / NBRC 12200 / NCIMB 9375 / NCTC 10341 / NRRL NRS-1264 / Gibson 46), this protein is Energy-coupling factor transporter ATP-binding protein EcfA2.